Consider the following 212-residue polypeptide: Pyrrolidone-carboxylate peptidase (212 aa).

Active-site residues include E80, C143, and H165.

This sequence belongs to the peptidase C15 family. In terms of assembly, homotetramer.

It is found in the cytoplasm. It catalyses the reaction Release of an N-terminal pyroglutamyl group from a polypeptide, the second amino acid generally not being Pro.. Functionally, removes 5-oxoproline from various penultimate amino acid residues except L-proline. The sequence is that of Pyrrolidone-carboxylate peptidase from Vibrio vulnificus (strain CMCP6).